A 325-amino-acid chain; its full sequence is Hexaprenyl-diphosphate synthase large subunit ((2E,6E)-farnesyl-diphosphate specific) (325 aa).

The isopentenyl diphosphate site is built by Lys45, Arg48, and His77. Residues Asp84, Asp88, and Arg93 each contribute to the all-trans-hexaprenyl diphosphate site. Positions 84 and 88 each coordinate Mg(2+). Residue Arg94 participates in isopentenyl diphosphate binding. All-trans-hexaprenyl diphosphate-binding residues include Lys170, Thr171, and Gln208.

This sequence belongs to the FPP/GGPP synthase family. In terms of assembly, dimer of heterodimer or heterotetramer composed of a small (Hexs-a) and large (Hexs-B) subunit. The cofactor is Mg(2+).

It carries out the reaction 3 isopentenyl diphosphate + (2E,6E)-farnesyl diphosphate = all-trans-hexaprenyl diphosphate + 3 diphosphate. Catalyzes the condensation of three molecules of isopentenyl diphosphate with farnesyl diphosphate (FPP) to yield (all-E)-hexaprenyl diphosphate (HexPP; C30), the precursor of the prenyl side chain of menaquinone-6. Large subunit Hexs-B catalyzes the condensation reaction and the final product chain length is cooperatively regulated by both the Hexs-A and Hexs-B subunits using the whole size of the hydrophobic cleft as a ruler. In Micrococcus luteus (Micrococcus lysodeikticus), this protein is Hexaprenyl-diphosphate synthase large subunit ((2E,6E)-farnesyl-diphosphate specific) (hexs-b).